The sequence spans 477 residues: 3-succinoylsemialdehyde-pyridine dehydrogenase (477 aa).

Position 202 to 208 (202 to 208 (GDGPGVG)) interacts with NAD(+). Residues Glu246 and Cys280 contribute to the active site.

The protein belongs to the aldehyde dehydrogenase family.

It carries out the reaction 4-oxo-4-(pyridin-3-yl)butanal + NADP(+) + H2O = 4-oxo-4-(pyridin-3-yl)butanoate + NADPH + 2 H(+). The protein operates within alkaloid degradation; nicotine degradation. Catalyzes the dehydrogenation of 3-succinoylsemialdehyde-pyridine to 3-succinoyl-pyridine in the nicotine degradation pathway. This chain is 3-succinoylsemialdehyde-pyridine dehydrogenase (ald), found in Pseudomonas sp.